A 263-amino-acid chain; its full sequence is Small ribosomal subunit protein uS2 (263 aa).

The segment covering 223-249 has biased composition (basic and acidic residues); that stretch reads KALREQDGEALANEEKEITDEEKKEVL. Residues 223–263 are disordered; that stretch reads KALREQDGEALANEEKEITDEEKKEVLDEAMSEEDFGEEQE. Acidic residues predominate over residues 250 to 263; it reads DEAMSEEDFGEEQE.

The protein belongs to the universal ribosomal protein uS2 family.

This chain is Small ribosomal subunit protein uS2, found in Campylobacter jejuni subsp. jejuni serotype O:6 (strain 81116 / NCTC 11828).